The chain runs to 448 residues: Phosphoglucosamine mutase (448 aa).

Ser-102 acts as the Phosphoserine intermediate in catalysis. Residues Ser-102, Asp-241, Asp-243, and Asp-245 each contribute to the Mg(2+) site. Residue Ser-102 is modified to Phosphoserine.

This sequence belongs to the phosphohexose mutase family. Mg(2+) is required as a cofactor. Post-translationally, activated by phosphorylation.

It catalyses the reaction alpha-D-glucosamine 1-phosphate = D-glucosamine 6-phosphate. Functionally, catalyzes the conversion of glucosamine-6-phosphate to glucosamine-1-phosphate. This Ruegeria pomeroyi (strain ATCC 700808 / DSM 15171 / DSS-3) (Silicibacter pomeroyi) protein is Phosphoglucosamine mutase.